The sequence spans 273 residues: Ribosomal RNA small subunit methyltransferase A (273 aa).

6 residues coordinate S-adenosyl-L-methionine: Asn-18, Leu-20, Gly-45, Glu-66, Asp-91, and Asn-113.

Belongs to the class I-like SAM-binding methyltransferase superfamily. rRNA adenine N(6)-methyltransferase family. RsmA subfamily.

It is found in the cytoplasm. The catalysed reaction is adenosine(1518)/adenosine(1519) in 16S rRNA + 4 S-adenosyl-L-methionine = N(6)-dimethyladenosine(1518)/N(6)-dimethyladenosine(1519) in 16S rRNA + 4 S-adenosyl-L-homocysteine + 4 H(+). Specifically dimethylates two adjacent adenosines (A1518 and A1519) in the loop of a conserved hairpin near the 3'-end of 16S rRNA in the 30S particle. May play a critical role in biogenesis of 30S subunits. In Citrobacter koseri (strain ATCC BAA-895 / CDC 4225-83 / SGSC4696), this protein is Ribosomal RNA small subunit methyltransferase A.